Here is a 513-residue protein sequence, read N- to C-terminus: Probable lipid II flippase MurJ (513 aa).

The next 15 membrane-spanning stretches (helical) occupy residues 3–23 (ILKSLISLSLITFISRILGFM), 25–45 (DLLIAYSFGASGITDAFFLAF), 83–103 (FISNILGLMIIILSLFTAFGI), 133–153 (IMFPYIFFVSLGSLTGSILNA), 162–182 (YSSIFLNLSMIMFISFVTAYF), 186–206 (ILSLAWAVIVGGVFQILYQFP), 221–241 (ILNLGVLKFLKQIGIVALGMS), 245–265 (VSIIIATISSSFLISGSISWI), 271–291 (LVEFISGIFGVSLSTILLPLL), 313–333 (LVCILVIPSIIILFTLSESLI), 354–374 (IEFYSIGLLPFVLIKILLAGF), 382–402 (TPMKISIFILVLTQLMNIFFI), 405–425 (FQYTSFALAISLASWINFFLL), 441–461 (WLRFLLKIFAAAMVMLILLFI), and 481–501 (LFYICASSGGGYLFTLFCLGL).

The protein belongs to the MurJ/MviN family.

The protein localises to the cell inner membrane. The protein operates within cell wall biogenesis; peptidoglycan biosynthesis. Its function is as follows. Involved in peptidoglycan biosynthesis. Transports lipid-linked peptidoglycan precursors from the inner to the outer leaflet of the cytoplasmic membrane. This chain is Probable lipid II flippase MurJ, found in Buchnera aphidicola subsp. Baizongia pistaciae (strain Bp).